The following is a 216-amino-acid chain: Ras-related protein Rab-5C (216 aa).

GTP is bound by residues serine 30, alanine 31, glycine 33, lysine 34, serine 35, serine 36, histidine 47, glutamate 48, threonine 53, glycine 79, asparagine 134, lysine 135, aspartate 137, alanine 165, and lysine 166. Residue serine 35 participates in Mg(2+) binding. 2 consecutive short sequence motifs (switch) follow at residues glutamine 45 to alanine 57 and alanine 78 to alanine 94. Threonine 53 contacts Mg(2+). A disordered region spans residues lysine 184–asparagine 216. Residues glutamine 203–asparagine 216 show a composition bias toward polar residues. S-geranylgeranyl cysteine attachment occurs at residues cysteine 213 and cysteine 214.

This sequence belongs to the small GTPase superfamily. Rab family. The cofactor is Mg(2+). In terms of tissue distribution, detected in brain, ovary, rectum, small intestine, large intestine, liver, spleen, follicle and kidney (at protein level).

The protein resides in the cell membrane. The protein localises to the early endosome membrane. The enzyme catalyses GTP + H2O = GDP + phosphate + H(+). Its activity is regulated as follows. Regulated by guanine nucleotide exchange factors (GEFs) which promote the exchange of bound GDP for free GTP. Regulated by GTPase activating proteins (GAPs) which increase the GTP hydrolysis activity. Inhibited by GDP dissociation inhibitors (GDIs). In terms of biological role, the small GTPases Rab are key regulators of intracellular membrane trafficking, from the formation of transport vesicles to their fusion with membranes. Rabs cycle between an inactive GDP-bound form and an active GTP-bound form that is able to recruit to membranes different sets of downstream effectors directly responsible for vesicle formation, movement, tethering and fusion. The polypeptide is Ras-related protein Rab-5C (RAB5C) (Gallus gallus (Chicken)).